The primary structure comprises 349 residues: Small ribosomal subunit protein uS2 (349 aa).

It belongs to the universal ribosomal protein uS2 family.

This is Small ribosomal subunit protein uS2 from Methylocella silvestris (strain DSM 15510 / CIP 108128 / LMG 27833 / NCIMB 13906 / BL2).